A 251-amino-acid polypeptide reads, in one-letter code: Probable transcriptional regulatory protein Blon_1155/BLIJ_1182 (251 aa).

The protein belongs to the TACO1 family.

The protein localises to the cytoplasm. This chain is Probable transcriptional regulatory protein Blon_1155/BLIJ_1182, found in Bifidobacterium longum subsp. infantis (strain ATCC 15697 / DSM 20088 / JCM 1222 / NCTC 11817 / S12).